A 101-amino-acid chain; its full sequence is Ubiquitin-related modifier 1 homolog (101 aa).

Residue glycine 101 is modified to 1-thioglycine. Glycine 101 participates in a covalent cross-link: Glycyl lysine isopeptide (Gly-Lys) (interchain with K-? in acceptor proteins).

Belongs to the URM1 family. As to quaternary structure, interacts with cer. Post-translationally, C-terminal thiocarboxylation occurs in 2 steps, it is first acyl-adenylated (-COAMP) via the hesA/moeB/thiF part of the MOCS3 homolog, then thiocarboxylated (-COSH) via the rhodanese domain of the MOCS3 homolog.

Its subcellular location is the cytoplasm. It participates in tRNA modification; 5-methoxycarbonylmethyl-2-thiouridine-tRNA biosynthesis. Its function is as follows. Acts as a sulfur carrier required for 2-thiolation of mcm(5)S(2)U at tRNA wobble positions of cytosolic tRNA(Lys), tRNA(Glu) and tRNA(Gln). Serves as sulfur donor in tRNA 2-thiolation reaction by being thiocarboxylated (-COSH) at its C-terminus by MOCS3. The sulfur is then transferred to tRNA to form 2-thiolation of mcm(5)S(2)U. Also acts as a ubiquitin-like protein (UBL) that is covalently conjugated via an isopeptide bond to lysine residues of target proteins such as Prx2/Jafrac1, Ciao1, Eip71CD and GILT1. The thiocarboxylated form serves as substrate for conjugation and oxidative stress specifically induces the formation of UBL-protein conjugates. The protein is Ubiquitin-related modifier 1 homolog of Drosophila yakuba (Fruit fly).